A 296-amino-acid polypeptide reads, in one-letter code: Stanniocalcin-2 (296 aa).

The first 24 residues, 1-24 (MCAERLGQFVTLALVFATLDPARG), serve as a signal peptide directing secretion. The interval 22–44 (ARGTDSTNPPEGPQDRGSQQKGR) is disordered. Asparagine 73 carries N-linked (GlcNAc...) asparagine glycosylation. The segment at 236–296 (RPYHRDTDHH…EQSEYSDIRR (61 aa)) is disordered. Over residues 238–258 (YHRDTDHHLTANRGAKGERGS) the composition is skewed to basic and acidic residues.

The protein belongs to the stanniocalcin family. As to quaternary structure, homodimer; disulfide-linked. In terms of tissue distribution, expressed in a variety of tissues. Strongly expressed in ovary and to a lesser extent in kidney.

The protein localises to the secreted. Has an anti-hypocalcemic action on calcium and phosphate homeostasis. The chain is Stanniocalcin-2 (Stc2) from Rattus norvegicus (Rat).